Reading from the N-terminus, the 400-residue chain is MTLKVCVCGGGNGAHTLSGLAASRDGVEVRVLTLFADEAERWTKALGADELTVIVNEKDGTQTEVKSRPKVITKDPQVAITGADVVILTVPAFAHEGYFQAMAPYVQDSALIVGLPSQAGFEFQCRDILGDKAAAVSMMSFETLPWACRIKEFGRKVEVLGTKSVLAASLIKGTAETVDPLSTLQKLHGAEPVFRLAKHFLEMLIMSYSFVHPAILYGRWGSWDGNPVSEAPLFYQGIDQATADMLTACSDECKAVGNAIMAACPGNDLSDVKDIYQWYLEYYHEDIQDDHDLYHAITTNKSYKGLVHPVKTVDGGVAPDFGNRYLTEDIPMGMIVFKGVAIAAGVPIPNNDKLITWAQEKIGKVYLVDGALTGKDVATTRCPQRYGFNTLNAILTGKKE.

Residues 10-13 (GGNG) and 35-38 (FADE) contribute to the NADH site. The pyruvate site is built by glutamine 118 and threonine 143. A substrate-binding site is contributed by glutamine 118. NAD(+) is bound at residue cysteine 148. Methionine 206 provides a ligand contact to L-arginine. Histidine 212 lines the pyruvate pocket. Histidine 212 is a catalytic residue. An NAD(+)-binding site is contributed by arginine 324.

Belongs to the lysopine/nopaline/octopine/opine/vitopine dehydrogenases family.

The enzyme catalyses D-octopine + NAD(+) + H2O = L-arginine + pyruvate + NADH + H(+). In terms of biological role, catalyzes the reverse reaction of octopine dehydrogenation. Acts on L-arginine in preference to other substrates. In Mizuhopecten yessoensis (Japanese scallop), this protein is Octopine dehydrogenase.